The chain runs to 32 residues: Acyclotide phyb-M (32 aa).

A Pyrrolidone carboxylic acid modification is found at Gln1. 3 disulfide bridges follow: Cys5–Cys21, Cys9–Cys23, and Cys14–Cys28.

Post-translationally, contains 3 disulfide bonds. In terms of tissue distribution, expressed in midvein, lamina and periphery of leaves (at protein level).

In terms of biological role, probably participates in a plant defense mechanism. The chain is Acyclotide phyb-M from Petunia hybrida (Petunia).